Here is a 245-residue protein sequence, read N- to C-terminus: Transcriptional regulatory protein YpdB (245 aa).

The Response regulatory domain occupies Lys2 to Glu116. 4-aspartylphosphate is present on Asp53. Positions Ile140–Leu245 constitute an HTH LytTR-type domain.

Post-translationally, phosphorylated by YpdA.

It localises to the cytoplasm. In terms of biological role, member of the two-component regulatory system YpdA/YpdB. YpdB regulates expression of yhjX by binding to its promoter region. This is Transcriptional regulatory protein YpdB (ypdB) from Escherichia coli O6:H1 (strain CFT073 / ATCC 700928 / UPEC).